Here is a 284-residue protein sequence, read N- to C-terminus: Nucleotide-binding protein Pput_0988 (284 aa).

An ATP-binding site is contributed by 8–15 (GRSGSGKS). Position 60-63 (60-63 (DARN)) interacts with GTP.

The protein belongs to the RapZ-like family.

Displays ATPase and GTPase activities. In Pseudomonas putida (strain ATCC 700007 / DSM 6899 / JCM 31910 / BCRC 17059 / LMG 24140 / F1), this protein is Nucleotide-binding protein Pput_0988.